Consider the following 334-residue polypeptide: 3-keto-steroid reductase/17-beta-hydroxysteroid dehydrogenase 7 (334 aa).

Topologically, residues 1–229 (MRKVVLITGA…VTCPGVVMTN (229 aa)) are extracellular. 8–15 (TGASSGIG) contacts NAD(+). A glycan (N-linked (GlcNAc...) asparagine) is linked at Asn37. Residue Ser171 participates in substrate binding. The N-linked (GlcNAc...) asparagine glycan is linked to Asn178. The Proton acceptor role is filled by Tyr193. Asn229 carries an N-linked (GlcNAc...) asparagine glycan. The chain crosses the membrane as a helical span at residues 230-250 (LTYGILPPFVWTLLLPVIWLL). Residues 251-334 (RFFAHAFTVT…ITIQKSDHHS (84 aa)) lie on the Cytoplasmic side of the membrane.

It belongs to the short-chain dehydrogenases/reductases (SDR) family. ERG27 subfamily. In terms of assembly, binds to the short form of prolactin receptor. Post-translationally, phosphorylated. In terms of tissue distribution, most abundant in ovaries of pregnant animals.

The protein localises to the endoplasmic reticulum membrane. It carries out the reaction 17beta-estradiol + NADP(+) = estrone + NADPH + H(+). It catalyses the reaction a 3beta-hydroxysteroid + NADP(+) = a 3-oxosteroid + NADPH + H(+). The enzyme catalyses 4alpha-methyl-5alpha-cholest-7-en-3beta-ol + NADP(+) = 4alpha-methyl-5alpha-cholest-7-en-3-one + NADPH + H(+). The catalysed reaction is 4alpha-methyl-5alpha-cholest-8-en-3-one + NADPH + H(+) = 4alpha-methyl-5alpha-cholest-8-en-3beta-ol + NADP(+). It carries out the reaction 3-dehydro-4alpha-methylzymosterol + NADPH + H(+) = 4alpha-methylzymosterol + NADP(+). It catalyses the reaction zymosterone + NADPH + H(+) = zymosterol + NADP(+). The enzyme catalyses 5alpha-cholest-8-en-3-one + NADPH + H(+) = 5alpha-cholest-8-en-3beta-ol + NADP(+). The catalysed reaction is 5alpha-androstane-3beta,17beta-diol + NADP(+) = 17beta-hydroxy-5alpha-androstan-3-one + NADPH + H(+). It carries out the reaction 5alpha-androstane-3alpha,17beta-diol + NADP(+) = 17beta-hydroxy-5alpha-androstan-3-one + NADPH + H(+). Its pathway is steroid biosynthesis; estrogen biosynthesis. It functions in the pathway steroid biosynthesis; zymosterol biosynthesis; zymosterol from lanosterol: step 5/6. In terms of biological role, bifunctional enzyme involved in steroid-hormone metabolism and cholesterol biosynthesis. Catalyzes the NADP(H)-dependent reduction of estrogens and androgens and regulates the biological potency of these steroids. Converts estrone (E1) to a more potent estrogen, 17beta-estradiol (E2). Converts dihydrotestosterone (DHT) to an inactive form. Also participates in the post-squalene cholesterol biosynthesis, as a 3-ketosteroid reductase. In Rattus norvegicus (Rat), this protein is 3-keto-steroid reductase/17-beta-hydroxysteroid dehydrogenase 7 (Hsd17b7).